We begin with the raw amino-acid sequence, 358 residues long: Microbial Terpene synthase-like protein 13 (358 aa).

This sequence belongs to the terpene synthase family.

Its function is as follows. No terpene synthase activity detected in vitro. This is Microbial Terpene synthase-like protein 13 from Selaginella moellendorffii (Spikemoss).